The sequence spans 166 residues: Phosphopantetheine adenylyltransferase (166 aa).

Serine 10 contacts substrate. Residues 10-11 (SF) and histidine 18 each bind ATP. Residues lysine 42, alanine 79, and arginine 93 each contribute to the substrate site. Residues 94–96 (GLR), glutamate 104, and 129–135 (VRPITAT) each bind ATP.

It belongs to the bacterial CoaD family. Homohexamer. It depends on Mg(2+) as a cofactor.

It localises to the cytoplasm. It catalyses the reaction (R)-4'-phosphopantetheine + ATP + H(+) = 3'-dephospho-CoA + diphosphate. It participates in cofactor biosynthesis; coenzyme A biosynthesis; CoA from (R)-pantothenate: step 4/5. Its function is as follows. Reversibly transfers an adenylyl group from ATP to 4'-phosphopantetheine, yielding dephospho-CoA (dPCoA) and pyrophosphate. In Methylobacterium nodulans (strain LMG 21967 / CNCM I-2342 / ORS 2060), this protein is Phosphopantetheine adenylyltransferase.